Here is a 146-residue protein sequence, read N- to C-terminus: Hemoglobin subunit beta-1 (146 aa).

A Globin domain is found at 2-146; that stretch reads HWTAEEKQLI…VSHSLARRYH (145 aa). 2 residues coordinate heme b: His63 and His92.

This sequence belongs to the globin family. The major hemoglobin component (HbIII) is a tetramer of two alpha-2 chains and two beta-1 chains. As to expression, red blood cells.

Its function is as follows. Involved in oxygen transport from the lung to the various peripheral tissues. The sequence is that of Hemoglobin subunit beta-1 (HBB1) from Varanus albigularis (White-throated monitor).